Consider the following 342-residue polypeptide: GTPase Obg (342 aa).

The Obg domain occupies 1 to 159 (MKFLDEAKVY…MWIWLRLKLI (159 aa)). The OBG-type G domain occupies 160–327 (ADAGLVGLPN…ALRALQTEID (168 aa)). GTP-binding positions include 166–173 (GLPNAGKS), 191–195 (FTTLH), 212–215 (DIPG), 279–282 (SKAD), and 308–310 (SSA). Residues Ser173 and Thr193 each coordinate Mg(2+).

Belongs to the TRAFAC class OBG-HflX-like GTPase superfamily. OBG GTPase family. As to quaternary structure, monomer. It depends on Mg(2+) as a cofactor.

The protein resides in the cytoplasm. Functionally, an essential GTPase which binds GTP, GDP and possibly (p)ppGpp with moderate affinity, with high nucleotide exchange rates and a fairly low GTP hydrolysis rate. Plays a role in control of the cell cycle, stress response, ribosome biogenesis and in those bacteria that undergo differentiation, in morphogenesis control. The sequence is that of GTPase Obg from Methylobacterium radiotolerans (strain ATCC 27329 / DSM 1819 / JCM 2831 / NBRC 15690 / NCIMB 10815 / 0-1).